A 301-amino-acid chain; its full sequence is Aspartate carbamoyltransferase catalytic subunit (301 aa).

Residues Arg-54 and Thr-55 each coordinate carbamoyl phosphate. Lys-82 is a binding site for L-aspartate. Residues Arg-104, His-132, and Gln-135 each coordinate carbamoyl phosphate. Residues Arg-165 and Arg-217 each coordinate L-aspartate. Gly-257 and Pro-258 together coordinate carbamoyl phosphate.

It belongs to the aspartate/ornithine carbamoyltransferase superfamily. ATCase family. As to quaternary structure, heterododecamer (2C3:3R2) of six catalytic PyrB chains organized as two trimers (C3), and six regulatory PyrI chains organized as three dimers (R2).

It carries out the reaction carbamoyl phosphate + L-aspartate = N-carbamoyl-L-aspartate + phosphate + H(+). It participates in pyrimidine metabolism; UMP biosynthesis via de novo pathway; (S)-dihydroorotate from bicarbonate: step 2/3. In terms of biological role, catalyzes the condensation of carbamoyl phosphate and aspartate to form carbamoyl aspartate and inorganic phosphate, the committed step in the de novo pyrimidine nucleotide biosynthesis pathway. This Thermus aquaticus protein is Aspartate carbamoyltransferase catalytic subunit.